Consider the following 291-residue polypeptide: MKSEAKDGEEESLQTAFKKLRVDASGSIVSLSVGEGTSVRASVRTTVDDTKPKTMCAPKDSWHGSTRKSSRGAVRIQRRRRSKSPVLHPPKFIHCSTTASPSSSQLKQRSQTEPLDGSSGRGISTPKEFSTGENSTSLDINHTGAAIEPLRSSVLRLPSESKTEELSDATQVSPESLTANDLSDFQSVSKLSQGKPCVCVGKACQCKRWHDMEVYSFSGLQNVPPLAPERRSLEDYSQSLHTRTLSGSPRSCSEQARVYVDDVTIEDLAGYMEYYLYIPKKMSHMAEMMYT.

Residues 44–139 (RTTVDDTKPK…STGENSTSLD (96 aa)) are disordered. The span at 65 to 83 (STRKSSRGAVRIQRRRRSK) shows a compositional bias: basic residues. 2 stretches are compositionally biased toward polar residues: residues 95 to 113 (CSTTASPSSSQLKQRSQTE) and 127 to 139 (KEFSTGENSTSLD). Thr-143 bears the Phosphothreonine mark.

As to expression, ubiquitous with high level in testis, placenta and cardiac myocytes. Expressed in testis, unpreganant uterus and cardiac myocytes.

In Rattus norvegicus (Rat), this protein is Oxidative stress-responsive serine-rich protein 1 (Oser1).